A 123-amino-acid polypeptide reads, in one-letter code: Holo-[acyl-carrier-protein] synthase (123 aa).

Mg(2+) contacts are provided by aspartate 8 and glutamate 60.

It belongs to the P-Pant transferase superfamily. AcpS family. Mg(2+) is required as a cofactor.

It localises to the cytoplasm. The enzyme catalyses apo-[ACP] + CoA = holo-[ACP] + adenosine 3',5'-bisphosphate + H(+). Transfers the 4'-phosphopantetheine moiety from coenzyme A to a Ser of acyl-carrier-protein. The polypeptide is Holo-[acyl-carrier-protein] synthase (Ehrlichia ruminantium (strain Gardel)).